Consider the following 179-residue polypeptide: Large ribosomal subunit protein uL5 (179 aa).

The protein belongs to the universal ribosomal protein uL5 family. Part of the 50S ribosomal subunit; part of the 5S rRNA/L5/L18/L25 subcomplex. Contacts the 5S rRNA and the P site tRNA. Forms a bridge to the 30S subunit in the 70S ribosome.

In terms of biological role, this is one of the proteins that bind and probably mediate the attachment of the 5S RNA into the large ribosomal subunit, where it forms part of the central protuberance. In the 70S ribosome it contacts protein S13 of the 30S subunit (bridge B1b), connecting the 2 subunits; this bridge is implicated in subunit movement. Contacts the P site tRNA; the 5S rRNA and some of its associated proteins might help stabilize positioning of ribosome-bound tRNAs. The protein is Large ribosomal subunit protein uL5 of Clostridium beijerinckii (strain ATCC 51743 / NCIMB 8052) (Clostridium acetobutylicum).